The chain runs to 160 residues: Large ribosomal subunit protein eL21 (160 aa).

Composition is skewed to basic and acidic residues over residues asparagine 112–glycine 123 and arginine 136–lysine 146. The segment at asparagine 112 to lysine 146 is disordered.

This sequence belongs to the eukaryotic ribosomal protein eL21 family. In terms of assembly, component of the large ribosomal subunit.

It is found in the cytoplasm. The protein resides in the cytosol. It localises to the endoplasmic reticulum. Its function is as follows. Component of the large ribosomal subunit. The ribosome is a large ribonucleoprotein complex responsible for the synthesis of proteins in the cell. In Rattus norvegicus (Rat), this protein is Large ribosomal subunit protein eL21 (Rpl21).